Consider the following 529-residue polypeptide: MSPSEYALEVAKRRTFAIISHPDAGKTTITEKVLLFGHAIQTAGTVKGRGSSHHAKSDWMEMEKQRGISITTSVMQFPYGGCLVNLLDTPGHEDFSEDTYRTLTAVDCCLMVIDAAKGVEDRTRKLMEVTRLRDTPILTFMNKLDREIRDPMEVLDEVERELNIACSPITWPIGCGKSFKGVYHLHKDETYLYQSGKGHTIQEVRIVKGLNNPDLDVAVGEDLAKQFRQELELVQGASHEFDHEAFLSGDLTPVFFGTALGNFGVDHMLDGLVEWAPAPMPRKTDTRVVVASEEKFTGFVFKIQANMDPKHRDRVAFMRVVSGRFEKGMKLRQVRTKKDVVISDALTFMAGDRSHVEEAYAGDIIGLHNHGTIQIGDTFTQGEDMKFTGIPNFAPELFRRIRLRDPLKQKQLLKGLVQLSEEGAVQVFRPLSNNDLIVGAVGVLQFEVVSSRLKSEYNVEAVYESVNVSTARWVECHDVKKFEEFKRKNELNLALDGGDNLSYIAPTMVNLNITQERYPDVIFRKTREH.

Residues alanine 11–methionine 280 form the tr-type G domain. GTP-binding positions include serine 20 to threonine 27, aspartate 88 to histidine 92, and asparagine 142 to aspartate 145.

It belongs to the TRAFAC class translation factor GTPase superfamily. Classic translation factor GTPase family. PrfC subfamily.

Its subcellular location is the cytoplasm. Its function is as follows. Increases the formation of ribosomal termination complexes and stimulates activities of RF-1 and RF-2. It binds guanine nucleotides and has strong preference for UGA stop codons. It may interact directly with the ribosome. The stimulation of RF-1 and RF-2 is significantly reduced by GTP and GDP, but not by GMP. This Yersinia pestis bv. Antiqua (strain Antiqua) protein is Peptide chain release factor 3.